The following is a 169-amino-acid chain: Peptide deformylase 1 (169 aa).

The Fe cation site is built by Cys93 and His135. Glu136 is an active-site residue. His139 is a binding site for Fe cation.

It belongs to the polypeptide deformylase family. It depends on Fe(2+) as a cofactor.

The catalysed reaction is N-terminal N-formyl-L-methionyl-[peptide] + H2O = N-terminal L-methionyl-[peptide] + formate. Its function is as follows. Removes the formyl group from the N-terminal Met of newly synthesized proteins. Requires at least a dipeptide for an efficient rate of reaction. N-terminal L-methionine is a prerequisite for activity but the enzyme has broad specificity at other positions. The sequence is that of Peptide deformylase 1 from Corynebacterium glutamicum (strain ATCC 13032 / DSM 20300 / JCM 1318 / BCRC 11384 / CCUG 27702 / LMG 3730 / NBRC 12168 / NCIMB 10025 / NRRL B-2784 / 534).